We begin with the raw amino-acid sequence, 124 residues long: Large ribosomal subunit protein uL14 (124 aa).

The protein belongs to the universal ribosomal protein uL14 family. As to quaternary structure, part of the 50S ribosomal subunit. Forms a cluster with proteins L3 and L19. In the 70S ribosome, L14 and L19 interact and together make contacts with the 16S rRNA in bridges B5 and B8.

Functionally, binds to 23S rRNA. Forms part of two intersubunit bridges in the 70S ribosome. The protein is Large ribosomal subunit protein uL14 of Mycoplasmoides gallisepticum (strain R(low / passage 15 / clone 2)) (Mycoplasma gallisepticum).